We begin with the raw amino-acid sequence, 511 residues long: FAD-dependent monooxygenase AOL_s00215g279 (511 aa).

The N-terminal stretch at 1 to 17 is a signal peptide; it reads MRFTLYGLLGFASLLHA. The FAD-binding PCMH-type domain maps to 85–256; it reads CWVNPACIVS…TEFDLRTRYS (172 aa). Histidine 122 carries the pros-8alpha-FAD histidine modification.

This sequence belongs to the oxygen-dependent FAD-linked oxidoreductase family.

It participates in secondary metabolite biosynthesis; terpenoid biosynthesis. Its function is as follows. FAD-dependent monooxygenase; part of the gene cluster that mediates the biosynthesis of sesquiterpenyl epoxy-cyclohexenoids (SECs) such as anthrobotrisins and arthrosporols, metabolites that possess a novel hybrid carbon skeleton consisting of a polyketide-derived epoxycyclohexenol combined with a terpenoid-derived monocyclic sesquiterpenol substructure (PKS-PTS hybrid). The SEC pathway plays an important role for fungal soil colonization via decreasing fungal nematode-capturing ability. Within the pathway, the FAD-dependent monooxygenase AOL_s00215g279 plays a role in the oxygenation of the phenol moiety, most likely in the epoxy formation. The pathway begins with the biosynthesis of 6-methylsalicylic acid (6-MSA), the first precursor of the polyketide-derived epoxycyclohexenol in arthrosporols, by the polyketide synthase (PKS) AOL_s00215g283 via condensation of 1 acetate and 3 malonate units. The 6-methylsalicylic acid decarboxylase AOL_s00215g281 then catalyzes the decarboxylation of 6-methylsalicylic acid to yield m-cresol. The cytochrome P450 monooxygenase AOL_s00215g282 further oxidizes m-cresol to yield toluquinol. With the assistance of the oxidoreductase AOL_s00215g277, the polyprenyl transferase AOL_s00215g276 catalyzes the farnesylation of toluquinol to produce farnesyl hydroquinone, the hybrid precursor for biosynthesis of SECs. Farnesyl hydroquinone undergoes epoxidation and then subsequent dehydrogenation to form farnesyl epoxy-quinone, the first and simplest SEC. The cytochrome P450 monooxygenase AOL_s00215g278 and the FAD-dependent monooxygenase AOL_s00215g279 might be involved in the oxygenation of the phenol moiety, most likely in the epoxy formation. The cytochrome P450 monooxygenases AOL_s00215g274 and AOL_s00215g280 are involved in specific regional ketone reductions at respectively C-4 and C-1 of farnesyl epoxy-quinone PubMed:33823587. In Arthrobotrys oligospora (strain ATCC 24927 / CBS 115.81 / DSM 1491) (Nematode-trapping fungus), this protein is FAD-dependent monooxygenase AOL_s00215g279.